The following is a 213-amino-acid chain: NADH-quinone oxidoreductase subunit C (213 aa).

This sequence belongs to the complex I 30 kDa subunit family. In terms of assembly, NDH-1 is composed of 14 different subunits. Subunits NuoB, C, D, E, F, and G constitute the peripheral sector of the complex.

It is found in the cell inner membrane. The enzyme catalyses a quinone + NADH + 5 H(+)(in) = a quinol + NAD(+) + 4 H(+)(out). NDH-1 shuttles electrons from NADH, via FMN and iron-sulfur (Fe-S) centers, to quinones in the respiratory chain. The immediate electron acceptor for the enzyme in this species is believed to be ubiquinone. Couples the redox reaction to proton translocation (for every two electrons transferred, four hydrogen ions are translocated across the cytoplasmic membrane), and thus conserves the redox energy in a proton gradient. This is NADH-quinone oxidoreductase subunit C from Rhodospirillum rubrum (strain ATCC 11170 / ATH 1.1.1 / DSM 467 / LMG 4362 / NCIMB 8255 / S1).